Consider the following 755-residue polypeptide: Photosystem I P700 chlorophyll a apoprotein A1 (755 aa).

The next 8 helical transmembrane spans lie at 72–95 (IFSAHFGHLAVVFVWLSGMYYHGA), 158–181 (LLCTAIGGLVMAGLCLFAGWFHYH), 197–221 (LNHHLAGLLGLGSLAWAGHQIHVAI), 297–315 (QAHHHLAIAVLFIVAGHMY), 352–375 (WHAQLAINLAMVGSLSIIVAQHMY), 391–417 (ISLFTHHMWIGGIFIVGGAAHGAIYMV), 439–461 (AIISHLNWVCLFLGFHAFGFYVH), and 536–554 (FMVHHIHAMTIHITVLILL). Residues Cys-578 and Cys-587 each contribute to the [4Fe-4S] cluster site. 2 helical membrane-spanning segments follow: residues 594 to 615 (HVFLGLFWMYNAISIVIFHFSW) and 669 to 691 (LSAYGLLFLGAHFVWAFSLMFLF). His-680 serves as a coordination point for chlorophyll a'. Residues Met-688 and Tyr-696 each contribute to the chlorophyll a site. Position 697 (Trp-697) interacts with phylloquinone. A helical transmembrane segment spans residues 729 to 749 (AVGVAHYLLGGIVTTWAFFLA).

Belongs to the PsaA/PsaB family. The PsaA/B heterodimer binds the P700 chlorophyll special pair and subsequent electron acceptors. PSI consists of a core antenna complex that captures photons, and an electron transfer chain that converts photonic excitation into a charge separation. The cyanobacterial PSI reaction center is composed of one copy each of PsaA,B,C,D,E,F,I,J,K,L,M and X, and forms trimeric complexes. It depends on PSI electron transfer chain: 5 chlorophyll a, 1 chlorophyll a', 2 phylloquinones and 3 4Fe-4S clusters. PSI core antenna: 90 chlorophyll a, 22 carotenoids, 3 phospholipids and 1 galactolipid. P700 is a chlorophyll a/chlorophyll a' dimer, A0 is one or more chlorophyll a, A1 is one or both phylloquinones and FX is a shared 4Fe-4S iron-sulfur center. as a cofactor.

The protein resides in the cellular thylakoid membrane. The catalysed reaction is reduced [plastocyanin] + hnu + oxidized [2Fe-2S]-[ferredoxin] = oxidized [plastocyanin] + reduced [2Fe-2S]-[ferredoxin]. In terms of biological role, psaA and PsaB bind P700, the primary electron donor of photosystem I (PSI), as well as the electron acceptors A0, A1 and FX. PSI is a plastocyanin/cytochrome c6-ferredoxin oxidoreductase, converting photonic excitation into a charge separation, which transfers an electron from the donor P700 chlorophyll pair to the spectroscopically characterized acceptors A0, A1, FX, FA and FB in turn. Oxidized P700 is reduced on the lumenal side of the thylakoid membrane by plastocyanin or cytochrome c6. The sequence is that of Photosystem I P700 chlorophyll a apoprotein A1 from Synechococcus sp. (strain JA-3-3Ab) (Cyanobacteria bacterium Yellowstone A-Prime).